A 179-amino-acid chain; its full sequence is Acireductone dioxygenase (179 aa).

Residues H97, H99, E103, and H141 each coordinate Fe(2+). Ni(2+) contacts are provided by H97, H99, E103, and H141.

This sequence belongs to the acireductone dioxygenase (ARD) family. In terms of assembly, monomer. Requires Fe(2+) as cofactor. It depends on Ni(2+) as a cofactor.

It catalyses the reaction 1,2-dihydroxy-5-(methylsulfanyl)pent-1-en-3-one + O2 = 3-(methylsulfanyl)propanoate + CO + formate + 2 H(+). The enzyme catalyses 1,2-dihydroxy-5-(methylsulfanyl)pent-1-en-3-one + O2 = 4-methylsulfanyl-2-oxobutanoate + formate + 2 H(+). It functions in the pathway amino-acid biosynthesis; L-methionine biosynthesis via salvage pathway; L-methionine from S-methyl-5-thio-alpha-D-ribose 1-phosphate: step 5/6. Its function is as follows. Catalyzes 2 different reactions between oxygen and the acireductone 1,2-dihydroxy-3-keto-5-methylthiopentene (DHK-MTPene) depending upon the metal bound in the active site. Fe-containing acireductone dioxygenase (Fe-ARD) produces formate and 2-keto-4-methylthiobutyrate (KMTB), the alpha-ketoacid precursor of methionine in the methionine recycle pathway. Ni-containing acireductone dioxygenase (Ni-ARD) produces methylthiopropionate, carbon monoxide and formate, and does not lie on the methionine recycle pathway. The sequence is that of Acireductone dioxygenase from Gluconacetobacter diazotrophicus (strain ATCC 49037 / DSM 5601 / CCUG 37298 / CIP 103539 / LMG 7603 / PAl5).